The primary structure comprises 335 residues: MDRIVEIEKYSLDETYETSLRPSNFDGYIGQESIKKNLNIFITAAKKRNECLDHILFSGPAGLGKTTLANIISYEMDANIKTTAAPMIEKSGDLAAILTNLSEGDILFIDEIHRLSPAIEEVLYPAMEDYRLDIIIGSGPAAQTIKIDLPKFTLIGATTRAGMLSNPLRDRFGMQFRLEFYKDSELALILQKAALKLNKTCEEKAALEIAKRSRSTPRIALRLLKRVRDFADVNDEEIITEKRANEALNSLGVNELGFDAMDLRYLELLTAAKQKPIGLASIAAALSEDENTIEDVIEPYLLANGYIERTAKGRIASTKSYSALKLNYEKTLFEE.

The tract at residues 1–181 (MDRIVEIEKY…FGMQFRLEFY (181 aa)) is large ATPase domain (RuvB-L). Residues leucine 20, arginine 21, glycine 62, lysine 65, threonine 66, threonine 67, 128-130 (EDY), arginine 171, tyrosine 181, and arginine 218 each bind ATP. Threonine 66 serves as a coordination point for Mg(2+). Residues 182–252 (KDSELALILQ…RANEALNSLG (71 aa)) are small ATPAse domain (RuvB-S). Residues 255-335 (ELGFDAMDLR…LNYEKTLFEE (81 aa)) form a head domain (RuvB-H) region. DNA contacts are provided by arginine 309 and arginine 314.

Belongs to the RuvB family. Homohexamer. Forms an RuvA(8)-RuvB(12)-Holliday junction (HJ) complex. HJ DNA is sandwiched between 2 RuvA tetramers; dsDNA enters through RuvA and exits via RuvB. An RuvB hexamer assembles on each DNA strand where it exits the tetramer. Each RuvB hexamer is contacted by two RuvA subunits (via domain III) on 2 adjacent RuvB subunits; this complex drives branch migration. In the full resolvosome a probable DNA-RuvA(4)-RuvB(12)-RuvC(2) complex forms which resolves the HJ.

The protein localises to the cytoplasm. The enzyme catalyses ATP + H2O = ADP + phosphate + H(+). Functionally, the RuvA-RuvB-RuvC complex processes Holliday junction (HJ) DNA during genetic recombination and DNA repair, while the RuvA-RuvB complex plays an important role in the rescue of blocked DNA replication forks via replication fork reversal (RFR). RuvA specifically binds to HJ cruciform DNA, conferring on it an open structure. The RuvB hexamer acts as an ATP-dependent pump, pulling dsDNA into and through the RuvAB complex. RuvB forms 2 homohexamers on either side of HJ DNA bound by 1 or 2 RuvA tetramers; 4 subunits per hexamer contact DNA at a time. Coordinated motions by a converter formed by DNA-disengaged RuvB subunits stimulates ATP hydrolysis and nucleotide exchange. Immobilization of the converter enables RuvB to convert the ATP-contained energy into a lever motion, pulling 2 nucleotides of DNA out of the RuvA tetramer per ATP hydrolyzed, thus driving DNA branch migration. The RuvB motors rotate together with the DNA substrate, which together with the progressing nucleotide cycle form the mechanistic basis for DNA recombination by continuous HJ branch migration. Branch migration allows RuvC to scan DNA until it finds its consensus sequence, where it cleaves and resolves cruciform DNA. In Campylobacter jejuni subsp. doylei (strain ATCC BAA-1458 / RM4099 / 269.97), this protein is Holliday junction branch migration complex subunit RuvB.